A 351-amino-acid polypeptide reads, in one-letter code: DNA polymerase IV (351 aa).

One can recognise a UmuC domain in the interval 4 to 185; sequence IIHVDMDCFF…LPLAKIPGVG (182 aa). 2 residues coordinate Mg(2+): D8 and D103. Residue E104 is part of the active site.

It belongs to the DNA polymerase type-Y family. In terms of assembly, monomer. Requires Mg(2+) as cofactor.

The protein localises to the cytoplasm. The catalysed reaction is DNA(n) + a 2'-deoxyribonucleoside 5'-triphosphate = DNA(n+1) + diphosphate. Poorly processive, error-prone DNA polymerase involved in untargeted mutagenesis. Copies undamaged DNA at stalled replication forks, which arise in vivo from mismatched or misaligned primer ends. These misaligned primers can be extended by PolIV. Exhibits no 3'-5' exonuclease (proofreading) activity. May be involved in translesional synthesis, in conjunction with the beta clamp from PolIII. This Salmonella choleraesuis (strain SC-B67) protein is DNA polymerase IV.